Here is a 942-residue protein sequence, read N- to C-terminus: Chitin synthase 4 (942 aa).

A disordered region spans residues 1-124 (MPPRYPFGGG…FDEHDGDVPL (124 aa)). Positions 14–26 (DEAHHQPLERRTT) are enriched in basic and acidic residues. Over residues 27–36 (AEAQGNSFTH) the composition is skewed to polar residues. Asn604 carries an N-linked (GlcNAc...) asparagine glycan. 7 consecutive transmembrane segments (helical) span residues 641–661 (TIQL…FFIL), 674–694 (VPNL…FLLS), 709–729 (AMVV…YLAV), 755–775 (IVIS…MFLE), 783–803 (IVQY…YAFA), 885–905 (VLCW…ISSI), and 909–929 (TIYM…RMMG).

It belongs to the chitin synthase family. Class I subfamily.

The protein localises to the cell membrane. The protein resides in the cytoplasmic vesicle membrane. It carries out the reaction [(1-&gt;4)-N-acetyl-beta-D-glucosaminyl](n) + UDP-N-acetyl-alpha-D-glucosamine = [(1-&gt;4)-N-acetyl-beta-D-glucosaminyl](n+1) + UDP + H(+). Functionally, polymerizes chitin, a structural polymer of the cell wall and septum, by transferring the sugar moiety of UDP-GlcNAc to the non-reducing end of the growing chitin polymer. This is Chitin synthase 4 from Mycosarcoma maydis (Corn smut fungus).